The primary structure comprises 359 residues: Phospho-N-acetylmuramoyl-pentapeptide-transferase (359 aa).

A run of 10 helical transmembrane segments spans residues R7–Y27, I28–I48, M82–V102, D103–L123, A147–I167, I179–T199, D203–I223, L229–Y249, I256–L276, and I337–I357.

This sequence belongs to the glycosyltransferase 4 family. MraY subfamily. Mg(2+) serves as cofactor.

The protein resides in the cell inner membrane. The enzyme catalyses UDP-N-acetyl-alpha-D-muramoyl-L-alanyl-gamma-D-glutamyl-meso-2,6-diaminopimeloyl-D-alanyl-D-alanine + di-trans,octa-cis-undecaprenyl phosphate = di-trans,octa-cis-undecaprenyl diphospho-N-acetyl-alpha-D-muramoyl-L-alanyl-D-glutamyl-meso-2,6-diaminopimeloyl-D-alanyl-D-alanine + UMP. It participates in cell wall biogenesis; peptidoglycan biosynthesis. Catalyzes the initial step of the lipid cycle reactions in the biosynthesis of the cell wall peptidoglycan: transfers peptidoglycan precursor phospho-MurNAc-pentapeptide from UDP-MurNAc-pentapeptide onto the lipid carrier undecaprenyl phosphate, yielding undecaprenyl-pyrophosphoryl-MurNAc-pentapeptide, known as lipid I. The chain is Phospho-N-acetylmuramoyl-pentapeptide-transferase from Prochlorococcus marinus subsp. pastoris (strain CCMP1986 / NIES-2087 / MED4).